Consider the following 441-residue polypeptide: Ribulose bisphosphate carboxylase large chain (441 aa).

Positions 89 and 139 each coordinate substrate. K141 serves as the catalytic Proton acceptor. K143 lines the substrate pocket. Residues K167, D169, and E170 each contribute to the Mg(2+) site. K167 carries the N6-carboxylysine modification. H260 (proton acceptor) is an active-site residue. Residues R261, H293, and S345 each coordinate substrate.

The protein belongs to the RuBisCO large chain family. Type I subfamily. As to quaternary structure, heterohexadecamer of 8 large chains and 8 small chains; disulfide-linked. The disulfide link is formed within the large subunit homodimers. It depends on Mg(2+) as a cofactor. In terms of processing, the disulfide bond which can form in the large chain dimeric partners within the hexadecamer appears to be associated with oxidative stress and protein turnover.

Its subcellular location is the plastid. It localises to the chloroplast. It carries out the reaction 2 (2R)-3-phosphoglycerate + 2 H(+) = D-ribulose 1,5-bisphosphate + CO2 + H2O. The catalysed reaction is D-ribulose 1,5-bisphosphate + O2 = 2-phosphoglycolate + (2R)-3-phosphoglycerate + 2 H(+). In terms of biological role, ruBisCO catalyzes two reactions: the carboxylation of D-ribulose 1,5-bisphosphate, the primary event in carbon dioxide fixation, as well as the oxidative fragmentation of the pentose substrate in the photorespiration process. Both reactions occur simultaneously and in competition at the same active site. This is Ribulose bisphosphate carboxylase large chain from Polemonium reptans (Greek valerian).